Consider the following 340-residue polypeptide: Putative 2-hydroxyacid dehydrogenase C1773.17c (340 aa).

Residues 169–170 (AI), 249–251 (TAR), and Asp-275 each bind NAD(+). Arg-251 is an active-site residue. Residue Glu-280 is part of the active site. His-298 acts as the Proton donor in catalysis. An NAD(+)-binding site is contributed by 298-301 (HCGV).

It belongs to the D-isomer specific 2-hydroxyacid dehydrogenase family.

In Schizosaccharomyces pombe (strain 972 / ATCC 24843) (Fission yeast), this protein is Putative 2-hydroxyacid dehydrogenase C1773.17c.